Reading from the N-terminus, the 243-residue chain is Arginine transport ATP-binding protein ArtP (243 aa).

Residues 3–242 (IRVKNLNFFY…KTEQFKHYLS (240 aa)) enclose the ABC transporter domain. 35-42 (GPSGAGKS) contacts ATP.

Belongs to the ABC transporter superfamily. In terms of assembly, the complex is composed of two ATP-binding proteins (ArtP), two transmembrane proteins (ArtM and ArtQ) and a solute-binding protein (ArtI).

The protein resides in the cell inner membrane. It catalyses the reaction a polar amino acid(out) + ATP + H2O = a polar amino acid(in) + ADP + phosphate + H(+). The catalysed reaction is L-arginine(out) + ATP + H2O = L-arginine(in) + ADP + phosphate + H(+). In terms of biological role, part of the ABC transporter complex ArtPIQM involved in arginine transport. Probably responsible for energy coupling to the transport system. The polypeptide is Arginine transport ATP-binding protein ArtP (artP) (Haemophilus influenzae (strain ATCC 51907 / DSM 11121 / KW20 / Rd)).